The chain runs to 348 residues: Interferon regulatory factor 2 (348 aa).

A DNA-binding region (IRF tryptophan pentad repeat) is located at residues 5 to 113 (RMRMRPWLEE…NAFRVYRMLP (109 aa)). 2 positions are modified to N6-acetyllysine: K75 and K78. The segment at 117–137 (RPSKKGKKTKSEKDDKFKQIK) is disordered. Residues 125–137 (TKSEKDDKFKQIK) are compositionally biased toward basic and acidic residues. Residues K137, K164, and K291 each participate in a glycyl lysine isopeptide (Lys-Gly) (interchain with G-Cter in SUMO) cross-link. Residues 311–348 (LPQVVSTASTSSSRPDRETRASVIKKTSDITQSRVKSC) form a disordered region. Polar residues-rich tracts occupy residues 314–323 (VVSTASTSSS) and 339–348 (DITQSRVKSC).

The protein belongs to the IRF family. As to quaternary structure, interacts with CREBBP in growing cells; the interaction acetylates IRF2 and regulates IRF2-dependent H4 promoter activity.

Its subcellular location is the nucleus. In terms of biological role, specifically binds to the upstream regulatory region of type I IFN and IFN-inducible MHC class I genes (the interferon consensus sequence (ICS)) and represses those genes. Also acts as an activator for several genes including H4 and IL7. Constitutively binds to the ISRE promoter to activate IL7. Involved in cell cycle regulation through binding the site II (HiNF-M) promoter region of H4 and activating transcription during cell growth. Antagonizes IRF1 transcriptional activation. This is Interferon regulatory factor 2 (IRF2) from Gallus gallus (Chicken).